Here is a 344-residue protein sequence, read N- to C-terminus: 4-dimethylallyltryptophan N-methyltransferase easF (344 aa).

This sequence belongs to the methyltransferase superfamily. As to quaternary structure, homodimer.

The catalysed reaction is 4-(3-methylbut-2-enyl)-L-tryptophan + S-adenosyl-L-methionine = 4-(3-methylbut-2-enyl)-L-abrine + S-adenosyl-L-homocysteine + H(+). The protein operates within alkaloid biosynthesis; ergot alkaloid biosynthesis. Its function is as follows. 4-dimethylallyltryptophan N-methyltransferase; part of the gene cluster that mediates the biosynthesis of fungal ergot alkaloid ergovaline, the predominant ergopeptine product in E.festucae var. lolii. DmaW catalyzes the first step of ergot alkaloid biosynthesis by condensing dimethylallyl diphosphate (DMAP) and tryptophan to form 4-dimethylallyl-L-tryptophan. The second step is catalyzed by the methyltransferase easF that methylates 4-dimethylallyl-L-tryptophan in the presence of S-adenosyl-L-methionine, resulting in the formation of 4-dimethylallyl-L-abrine. The catalase easC and the FAD-dependent oxidoreductase easE then transform 4-dimethylallyl-L-abrine to chanoclavine-I which is further oxidized by easD in the presence of NAD(+), resulting in the formation of chanoclavine-I aldehyde. Agroclavine dehydrogenase easG then mediates the conversion of chanoclavine-I aldehyde to agroclavine via a non-enzymatic adduct reaction: the substrate is an iminium intermediate that is formed spontaneously from chanoclavine-I aldehyde in the presence of glutathione. The presence of easA is not required to complete this reaction. Further conversion of agroclavine to paspalic acid is a two-step process involving oxidation of agroclavine to elymoclavine and of elymoclavine to paspalic acid, the second step being performed by the elymoclavine oxidase cloA. Paspalic acid is then further converted to D-lysergic acid. Ergovaline is assembled from D-lysergic acid and three different amino acids by the D-lysergyl-peptide-synthetase composed of a monomudular (lpsB) and a trimodular (lpsA) nonribosomal peptide synthetase subunit. The protein is 4-dimethylallyltryptophan N-methyltransferase easF of Epichloe festucae var. lolii (Neotyphodium lolii).